Reading from the N-terminus, the 262-residue chain is Inactive snake venom serine proteinase 13 (262 aa).

The N-terminal stretch at 1–18 is a signal peptide; that stretch reads MGLIRVLANLLILQLSYA. Residues 19–24 constitute a propeptide that is removed on maturation; sequence QKSSEL. The 226-residue stretch at 25–250 folds into the Peptidase S1 domain; it reads VIGGDECNIN…HLDWIQSIIA (226 aa). 6 cysteine pairs are disulfide-bonded: C31/C162, C49/C65, C97/C257, C141/C211, C173/C190, and C201/C226. 3 N-linked (GlcNAc...) asparagine glycosylation sites follow: N78, N102, and N153.

This sequence belongs to the peptidase S1 family. Snake venom subfamily. As to quaternary structure, monomer. In terms of tissue distribution, expressed by the venom gland.

The protein resides in the secreted. The protein is Inactive snake venom serine proteinase 13 of Crotalus adamanteus (Eastern diamondback rattlesnake).